We begin with the raw amino-acid sequence, 326 residues long: Probable iron chelatin transport system permease protein HP_0889 (326 aa).

10 helical membrane passes run 7–27 (IALA…ESLS), 64–84 (ILAL…QTIF), 91–111 (PFLL…IAVV), 113–133 (SNIA…VLAM), 142–162 (LSLV…AGAI), 164–184 (FFVI…SLSL), 187–207 (YKDC…LFLL), 241–261 (VASA…LVIP), 275–295 (LLLS…VVAK), and 301–321 (DLPV…WLLF).

This sequence belongs to the binding-protein-dependent transport system permease family. FecCD subfamily.

It is found in the cell inner membrane. In terms of biological role, part of a binding-protein-dependent transport system for an iron chelatin; probably responsible for the translocation of the substrate across the membrane. The sequence is that of Probable iron chelatin transport system permease protein HP_0889 from Helicobacter pylori (strain ATCC 700392 / 26695) (Campylobacter pylori).